The following is a 370-amino-acid chain: 3-isopropylmalate dehydrogenase 1 (370 aa).

Substrate-binding residues include arginine 98, arginine 108, arginine 136, and aspartate 227. The Mg(2+) site is built by aspartate 227, aspartate 251, and aspartate 255. NAD(+) is bound at residue glycine 289–asparagine 301.

The protein belongs to the isocitrate and isopropylmalate dehydrogenases family. LeuB type 1 subfamily. As to quaternary structure, homodimer. Mg(2+) is required as a cofactor. It depends on Mn(2+) as a cofactor.

It localises to the cytoplasm. It carries out the reaction (2R,3S)-3-isopropylmalate + NAD(+) = 4-methyl-2-oxopentanoate + CO2 + NADH. The protein operates within amino-acid biosynthesis; L-leucine biosynthesis; L-leucine from 3-methyl-2-oxobutanoate: step 3/4. Its function is as follows. Catalyzes the oxidation of 3-carboxy-2-hydroxy-4-methylpentanoate (3-isopropylmalate) to 3-carboxy-4-methyl-2-oxopentanoate. The product decarboxylates to 4-methyl-2 oxopentanoate. This is 3-isopropylmalate dehydrogenase 1 from Bordetella bronchiseptica (strain ATCC BAA-588 / NCTC 13252 / RB50) (Alcaligenes bronchisepticus).